A 450-amino-acid polypeptide reads, in one-letter code: MADNAPPTAETLLSGAAAHPQTAEEIANQYNLLPKLIPYLDRHLVFPLLEFSSGQDDEKEVVRAKYELLKHTNMTDYVANLWKEIHNSDTIPDEFVKKREEVLSKLQEYEEESAKITQLLQDESVVANLRSDKAANLKFLEEQHGVTVEMVNSLYEYGRFQYSCGSYGNAAELLYQFRVLSTDNDKVASATWGKLASEILTTSWDAAMEEVLKVKDSIETRLFNNPLGQLQNRSWLIHWALFPFFNHDPARDALTELFFSPAYINTIQTNCPWILRYLAAAVITNRNRAHKSSGSYQKQLKDLIRVVRQEGYEYSDPITDFVKALYIDFDFEEAQKKLGEAEDVLRSDFFLVSAADAFVEAARHLISESYCKIHQRIDIKDLSTRLGLNQDEGEKWIVNLIRDTRVDAKIDYKEGTVIMNHPPQSVYQQVIEKTKGAFFRTQVLRFVFPI.

Residues 255 to 424 (TELFFSPAYI…GTVIMNHPPQ (170 aa)) form the PCI domain.

It belongs to the eIF-3 subunit E family. Component of the eukaryotic translation initiation factor 3 (eIF-3) complex.

Its subcellular location is the cytoplasm. In terms of biological role, component of the eukaryotic translation initiation factor 3 (eIF-3) complex, which is involved in protein synthesis of a specialized repertoire of mRNAs and, together with other initiation factors, stimulates binding of mRNA and methionyl-tRNAi to the 40S ribosome. The eIF-3 complex specifically targets and initiates translation of a subset of mRNAs involved in cell proliferation. The polypeptide is Eukaryotic translation initiation factor 3 subunit E (int6) (Aspergillus clavatus (strain ATCC 1007 / CBS 513.65 / DSM 816 / NCTC 3887 / NRRL 1 / QM 1276 / 107)).